A 201-amino-acid polypeptide reads, in one-letter code: MSRYRGPRFKKIRRLGALPGLTSKRPRPGSDLRNQSRSGKRSQYRIRLEEKQKLRFHYGLTERQLLRYVRIAGKAKGSTGQVLLQLLEMRLDNILFRLGMASTIPGARQLVNHRHILVNGRIVDIPSYRCKPRDIITTRGEQRSRALIQNYIDSSPHEELAKHLTFHSSQYKGLVNQIIDSKWIGLKINELLVVEYYSRQT.

The tract at residues 15 to 43 (LGALPGLTSKRPRPGSDLRNQSRSGKRSQ) is disordered. An S4 RNA-binding domain is found at 89 to 150 (MRLDNILFRL…EQRSRALIQN (62 aa)).

The protein belongs to the universal ribosomal protein uS4 family. In terms of assembly, part of the 30S ribosomal subunit. Contacts protein S5. The interaction surface between S4 and S5 is involved in control of translational fidelity.

Its subcellular location is the plastid. The protein resides in the chloroplast. One of the primary rRNA binding proteins, it binds directly to 16S rRNA where it nucleates assembly of the body of the 30S subunit. Its function is as follows. With S5 and S12 plays an important role in translational accuracy. This Liriodendron tulipifera (Tuliptree) protein is Small ribosomal subunit protein uS4c (rps4).